We begin with the raw amino-acid sequence, 490 residues long: Pentatricopeptide repeat-containing protein At2g20710, mitochondrial (490 aa).

The N-terminal 86 residues, 1–86, are a transit peptide targeting the mitochondrion; the sequence is MKHLLLLRLV…IKMLRKFSRF (86 aa). PPR repeat units lie at residues 138-172, 173-207, 208-243, 244-274, 280-310, 314-344, 349-379, and 384-421; these read NYHL…GFLK, GCLP…TVKP, DIFT…GLHL, DWRT…SEQM, RKHA…YKEL, YNTG…WEAG, DIRI…LVQK, and DTST…GWRP.

This sequence belongs to the PPR family. P subfamily.

The protein localises to the mitochondrion. In Arabidopsis thaliana (Mouse-ear cress), this protein is Pentatricopeptide repeat-containing protein At2g20710, mitochondrial.